The chain runs to 1490 residues: ABC transporter CDR4 (1490 aa).

Positions 1–12 are enriched in polar residues; sequence MADADTSSNSSK. Disordered stretches follow at residues 1-26 and 53-75; these read MADA…GTYQ and LKRQ…LSGK. Topologically, residues 1 to 516 are cytoplasmic; the sequence is MADADTSSNS…NILRIKGNPS (516 aa). The span at 58 to 67 shows a compositional bias: basic and acidic residues; sequence SRQESQKSNE. An ABC transporter 1 domain is found at 151–407; that stretch reads PKYLSLFFRE…FIDMGYECPQ (257 aa). 6 consecutive transmembrane segments (helical) span residues 517 to 537, 551 to 571, 601 to 621, 626 to 646, 659 to 679, and 767 to 787; these read IHLF…SIFY, AALF…IFSL, LPTK…MVNF, GNFF…SHIF, AMTP…FVIP, and FGIV…LCEI. Topologically, residues 788 to 1182 are cytoplasmic; it reads NKGAMQKGEI…VFEQNWRTPS (395 aa). The 245-residue stretch at 846–1090 folds into the ABC transporter 2 domain; it reads FFWRDLTYQV…LINYFEKYGA (245 aa). An ATP-binding site is contributed by 882-889; it reads GASGAGKT. The next 3 membrane-spanning stretches (helical) occupy residues 1183–1203, 1217–1237, and 1268–1288; these read YLYS…FSFY, FSVF…LPTF, and IPWN…PVGL. An N-linked (GlcNAc...) asparagine glycan is attached at Asn-1291. A run of 3 helical transmembrane segments spans residues 1304–1324, 1333–1353, and 1370–1390; these read FMWF…QLCI, AANL…VLVT, and FTYL…VTCA. Asn-1424 carries an N-linked (GlcNAc...) asparagine glycan. A helical membrane pass occupies residues 1455 to 1475; it reads IGIYIAFIGINIIGTFILYWF.

It belongs to the ABC transporter superfamily. ABCG family. PDR (TC 3.A.1.205) subfamily.

It is found in the membrane. This Candida albicans (Yeast) protein is ABC transporter CDR4 (CDR4).